A 246-amino-acid polypeptide reads, in one-letter code: 1-(5-phosphoribosyl)-5-[(5-phosphoribosylamino)methylideneamino] imidazole-4-carboxamide isomerase (246 aa).

The active-site Proton acceptor is the D8. The Proton donor role is filled by D131.

This sequence belongs to the HisA/HisF family.

It localises to the cytoplasm. The enzyme catalyses 1-(5-phospho-beta-D-ribosyl)-5-[(5-phospho-beta-D-ribosylamino)methylideneamino]imidazole-4-carboxamide = 5-[(5-phospho-1-deoxy-D-ribulos-1-ylimino)methylamino]-1-(5-phospho-beta-D-ribosyl)imidazole-4-carboxamide. Its pathway is amino-acid biosynthesis; L-histidine biosynthesis; L-histidine from 5-phospho-alpha-D-ribose 1-diphosphate: step 4/9. This Polaromonas naphthalenivorans (strain CJ2) protein is 1-(5-phosphoribosyl)-5-[(5-phosphoribosylamino)methylideneamino] imidazole-4-carboxamide isomerase.